The primary structure comprises 298 residues: Sulfate adenylyltransferase subunit 2 (298 aa).

Composition is skewed to basic and acidic residues over residues 272–282 (RTSERQGRLID) and 289–298 (MEKKKQEGYF). Residues 272-298 (RTSERQGRLIDSDSAGSMEKKKQEGYF) are disordered.

The protein belongs to the PAPS reductase family. CysD subfamily. Heterodimer composed of CysD, the smaller subunit, and CysN.

The enzyme catalyses sulfate + ATP + H(+) = adenosine 5'-phosphosulfate + diphosphate. It functions in the pathway sulfur metabolism; hydrogen sulfide biosynthesis; sulfite from sulfate: step 1/3. Its function is as follows. With CysN forms the ATP sulfurylase (ATPS) that catalyzes the adenylation of sulfate producing adenosine 5'-phosphosulfate (APS) and diphosphate, the first enzymatic step in sulfur assimilation pathway. APS synthesis involves the formation of a high-energy phosphoric-sulfuric acid anhydride bond driven by GTP hydrolysis by CysN coupled to ATP hydrolysis by CysD. The polypeptide is Sulfate adenylyltransferase subunit 2 (Burkholderia lata (strain ATCC 17760 / DSM 23089 / LMG 22485 / NCIMB 9086 / R18194 / 383)).